The sequence spans 209 residues: Large ribosomal subunit protein uL3 (209 aa).

This sequence belongs to the universal ribosomal protein uL3 family. In terms of assembly, part of the 50S ribosomal subunit. Forms a cluster with proteins L14 and L19.

Functionally, one of the primary rRNA binding proteins, it binds directly near the 3'-end of the 23S rRNA, where it nucleates assembly of the 50S subunit. The polypeptide is Large ribosomal subunit protein uL3 (Desulfotalea psychrophila (strain LSv54 / DSM 12343)).